Here is a 132-residue protein sequence, read N- to C-terminus: AP-2 complex subunit sigma (132 aa).

Belongs to the adaptor complexes small subunit family. In terms of assembly, adaptor protein complex 2 (AP-2) is a heterotetramer composed of two large adaptins (alpha-type and beta-type subunits), a medium adaptin (mu-type subunit AP50) and a small adaptin (sigma-type subunit AP17). Widely expressed in the embryo, endosperm, leaf and root.

Its subcellular location is the cell membrane. It is found in the membrane. The protein localises to the coated pit. Its function is as follows. Component of the adaptor complexes which link clathrin to receptors in coated vesicles. Clathrin-associated protein complexes are believed to interact with the cytoplasmic tails of membrane proteins, leading to their selection and concentration. AP2S1/AP17 is a subunit of the plasma membrane adaptor. The complex binds polyphosphoinositides. In Zea mays (Maize), this protein is AP-2 complex subunit sigma (AP-17).